A 124-amino-acid polypeptide reads, in one-letter code: Small ribosomal subunit protein bS6 (124 aa).

The tract at residues lysine 93–serine 124 is disordered. Residues threonine 105–glutamine 115 are compositionally biased toward basic and acidic residues.

The protein belongs to the bacterial ribosomal protein bS6 family.

In terms of biological role, binds together with bS18 to 16S ribosomal RNA. The protein is Small ribosomal subunit protein bS6 of Variovorax paradoxus (strain S110).